The chain runs to 220 residues: 5-hmdU DNA kinase 1 (220 aa).

Belongs to the thymidylate kinase family. 5-hmdU DNA kinase subfamily.

The enzyme catalyses 5-hydroxymethyl-dUMP in DNA + ATP = 5-phosphomethyl-dUMP in DNA + ADP + H(+). In terms of biological role, phosphorylates 5-hydroxymethyluracil (5hmdU) into 5-phosphomethyl-2'-deoxyuridine (5- PmdU) on DNA as a step in the pathway leading to thymidine hypermodifications in the viral genome. The phosphate is added internally to the DNA polymer. As a final result of the pathway of hypermodification, 5-aminoethoxy-2'-deoxymethyluridine (5-NeOmdU) substitutes for about 40% of the thymidines in the viral DNA. These modifications probably prevent degradation of viral genome by the host restriction-modification antiviral defense system. This chain is 5-hmdU DNA kinase 1, found in Salmonella phage ViI.